Consider the following 841-residue polypeptide: Protein translocase subunit SecA (841 aa).

Residues Gln-86, 104-108, and Asp-493 each bind ATP; that span reads GEGKT. A disordered region spans residues 788-822; it reads EEVAEGKAVRPSANGQEDKKAKRKPVRKAENIGRN. Zn(2+) contacts are provided by Cys-825, Cys-827, Cys-836, and Cys-837.

Belongs to the SecA family. Monomer and homodimer. Part of the essential Sec protein translocation apparatus which comprises SecA, SecYEG and auxiliary proteins SecDF. Other proteins may also be involved. It depends on Zn(2+) as a cofactor.

It is found in the cell membrane. The protein localises to the cytoplasm. The catalysed reaction is ATP + H2O + cellular proteinSide 1 = ADP + phosphate + cellular proteinSide 2.. Part of the Sec protein translocase complex. Interacts with the SecYEG preprotein conducting channel. Has a central role in coupling the hydrolysis of ATP to the transfer of proteins into and across the cell membrane, serving as an ATP-driven molecular motor driving the stepwise translocation of polypeptide chains across the membrane. The protein is Protein translocase subunit SecA of Shouchella clausii (strain KSM-K16) (Alkalihalobacillus clausii).